A 205-amino-acid polypeptide reads, in one-letter code: Troponin I, cardiac muscle (205 aa).

Residues 1–38 are disordered; it reads MADQSGNAAPPPVRRRSSANYRAYATEPHAKKKSKISA. Residue A2 is modified to N-acetylalanine. S5 carries the phosphoserine modification. 2 positions are modified to phosphoserine; by PKA and PKD/PRKD1: S17 and S18. Position 21 is a phosphotyrosine (Y21). At T26 the chain carries Phosphothreonine; by STK4/MST1. The tract at residues 27–74 is involved in binding TNC; sequence EPHAKKKSKISASRKLQLKTLMLQIAKQELEREAVERRGEKGRALSTR. Phosphoserine; by PKC/PRKCE occurs at positions 37 and 39. T46 is subject to Phosphothreonine; by STK4/MST1. S72 bears the Phosphoserine mark. At T73 the chain carries Phosphothreonine. The segment at 124–145 is involved in binding TNC and actin; sequence NQKIFDLRGKFKRPTLRRVRIS. T138 carries the phosphothreonine; by STK4/MST1 modification. At S145 the chain carries Phosphoserine; by PAK3. T176 bears the Phosphothreonine mark. The residue at position 194 (S194) is a Phosphoserine.

The protein belongs to the troponin I family. Binds to actin and tropomyosin. Interacts with TRIM63. Interacts with STK4/MST1. In terms of processing, phosphorylated at Ser-17 and Ser-18 by PRKD1; phosphorylation reduces myofilament calcium sensitivity. Phosphorylated preferentially at Thr-26. Phosphorylation by STK4/MST1 alters its binding affinity to TNNC1 (cardiac Tn-C) and TNNT2 (cardiac Tn-T). Phosphorylated at Ser-37 and Ser-39 by PRKCE; phosphorylation increases myocardium contractile dysfunction.

In terms of biological role, troponin I is the inhibitory subunit of troponin, the thin filament regulatory complex which confers calcium-sensitivity to striated muscle actomyosin ATPase activity. This chain is Troponin I, cardiac muscle (TNNI3), found in Equus caballus (Horse).